The sequence spans 612 residues: tRNA 5-methylaminomethyl-2-thiouridine biosynthesis bifunctional protein MnmC (612 aa).

Residues 1-218 (MITFRGDGLY…KREILEASLE (218 aa)) form a tRNA (mnm(5)s(2)U34)-methyltransferase region. Residues 244–612 (IGAGVAGLAA…VRKLKRGLVR (369 aa)) are FAD-dependent cmnm(5)s(2)U34 oxidoreductase.

The protein in the N-terminal section; belongs to the methyltransferase superfamily. tRNA (mnm(5)s(2)U34)-methyltransferase family. This sequence in the C-terminal section; belongs to the DAO family. The cofactor is FAD.

Its subcellular location is the cytoplasm. It catalyses the reaction 5-aminomethyl-2-thiouridine(34) in tRNA + S-adenosyl-L-methionine = 5-methylaminomethyl-2-thiouridine(34) in tRNA + S-adenosyl-L-homocysteine + H(+). Catalyzes the last two steps in the biosynthesis of 5-methylaminomethyl-2-thiouridine (mnm(5)s(2)U) at the wobble position (U34) in tRNA. Catalyzes the FAD-dependent demodification of cmnm(5)s(2)U34 to nm(5)s(2)U34, followed by the transfer of a methyl group from S-adenosyl-L-methionine to nm(5)s(2)U34, to form mnm(5)s(2)U34. This Campylobacter fetus subsp. fetus (strain 82-40) protein is tRNA 5-methylaminomethyl-2-thiouridine biosynthesis bifunctional protein MnmC.